Here is a 297-residue protein sequence, read N- to C-terminus: Streptogrisin-A (297 aa).

The signal sequence occupies residues 1 to 38 (MTFKRFSPLSSTSRYARLLAVASGLVAAAALATPSAVA). Residues 39–115 (APEAESKATV…VKRAEGKFTP (77 aa)) constitute a propeptide that is removed on maturation. A disulfide bridge links Cys-130 with Cys-150. Catalysis depends on charge relay system residues His-149, Asp-171, and Ser-253. Cys-247 and Cys-274 are oxidised to a cystine.

It belongs to the peptidase S1 family. Monomer.

The enzyme catalyses Hydrolysis of proteins with specificity similar to chymotrypsin.. Its function is as follows. Has a primary specificity for large aliphatic or aromatic amino acids. This Streptomyces griseus protein is Streptogrisin-A (sprA).